The primary structure comprises 445 residues: Phosphoglucosamine mutase 1 (445 aa).

Ser-102 serves as the catalytic Phosphoserine intermediate. Mg(2+) contacts are provided by Ser-102, Asp-241, Asp-243, and Asp-245. Ser-102 is subject to Phosphoserine.

It belongs to the phosphohexose mutase family. The cofactor is Mg(2+). Post-translationally, activated by phosphorylation.

It catalyses the reaction alpha-D-glucosamine 1-phosphate = D-glucosamine 6-phosphate. Its function is as follows. Catalyzes the conversion of glucosamine-6-phosphate to glucosamine-1-phosphate. In Shewanella baltica (strain OS185), this protein is Phosphoglucosamine mutase 1.